Here is a 491-residue protein sequence, read N- to C-terminus: Nuatigenin 3-beta-glucosyltransferase (491 aa).

His20 acts as the Proton acceptor in catalysis. An an anthocyanidin-binding site is contributed by His20. The Charge relay role is filled by Asp125. Residues Ala352, Gln354, His369, Trp372, Asn373, Ser374, and Glu377 each coordinate UDP-alpha-D-glucose. Ala392 is a binding site for an anthocyanidin. UDP-alpha-D-glucose is bound by residues Glu393 and Gln394.

It belongs to the UDP-glycosyltransferase family. Expressed in roots, stems and leaves.

The enzyme catalyses nuatigenin + UDP-alpha-D-glucose = nuatigenin 3-beta-D-glucopyranoside + UDP + H(+). It carries out the reaction diosgenin + UDP-alpha-D-glucose = diosgenin 3-O-beta-D-glucoside + UDP + H(+). It catalyses the reaction tigogenin + UDP-alpha-D-glucose = tigogenin 3-O-beta-D-glucopyranoside + UDP + H(+). The catalysed reaction is solasodine + UDP-alpha-D-glucose = solasodine 3-beta-D-glucoside + UDP + H(+). The enzyme catalyses solanidine + UDP-alpha-D-glucose = solanidine 3-O-beta-D-glucopyranoside + UDP + H(+). It carries out the reaction tomatidine + UDP-alpha-D-glucose = tomatidine 3-O-beta-D-glucopyranoside + UDP + H(+). Its function is as follows. Glucosyltransferase involved in steroid saponin biosynthesis. Catalyzes the 3-O-glucosylation of steroidal sapogenins, such as diosgenin, nuatigenin and tigogenin. Can glucosylate steroidal alkaloids, such as solanidine, solasodine and tomatidine. This chain is Nuatigenin 3-beta-glucosyltransferase, found in Solanum aculeatissimum (Dutch eggplant).